Consider the following 416-residue polypeptide: cAMP-dependent protein kinase type II-beta regulatory subunit (416 aa).

Residues 2–151 (SIEIPAGLTE…RLQEACKDIL (150 aa)) are dimerization and phosphorylation. The disordered stretch occupies residues 53–97 (HEGRTWGDAGAAAGGGTPSKGVNFAEEPMRSDSENGEEEEAAEAG). Thr-69 bears the Phosphothreonine mark. Residues Ser-83, Ser-85, and Ser-112 each carry the phosphoserine modification. 3',5'-cyclic AMP-binding positions include 152–273 (LFKN…ESLP), Glu-221, Arg-230, 274–416 (FLKS…EPTA), Glu-350, and Arg-359.

It belongs to the cAMP-dependent kinase regulatory chain family. As to quaternary structure, the inactive form of the enzyme is composed of two regulatory chains and two catalytic chains. Activation by cAMP produces two active catalytic monomers and a regulatory dimer that binds four cAMP molecules. Interacts with PRKACA and PRKACB. Interacts with the phosphorylated form of PJA2. Forms a complex composed of PRKAR2B, GSK3B and GSKIP through GSKIP interaction; facilitates PKA-induced phosphorylation and regulates GSK3B activity. Phosphorylated by the activated catalytic chain. In terms of tissue distribution, four types of regulatory chains are found: I-alpha, I-beta, II-alpha, and II-beta. Their expression varies among tissues and is in some cases constitutive and in others inducible. Brain. Present in a few pyramidal neurons and mostly in mossy fibers. Colocalizes with PJA2 in dentate granule cells and at postsynaptic sites of primary hippocampal neurons.

Its subcellular location is the cytoplasm. It localises to the cell membrane. In terms of biological role, regulatory subunit of the cAMP-dependent protein kinases involved in cAMP signaling in cells. Type II regulatory chains mediate membrane association by binding to anchoring proteins, including the MAP2 kinase. This Rattus norvegicus (Rat) protein is cAMP-dependent protein kinase type II-beta regulatory subunit (Prkar2b).